A 1083-amino-acid polypeptide reads, in one-letter code: Solute carrier family 12 member 7 (1083 aa).

The segment at 1–55 (MPTNFTVVPVEARADGAGDEAAERTEEPESPESVDQTSPTPGDGNPRENSPFINN) is disordered. Topologically, residues 1–119 (MPTNFTVVPV…RREVKAPRMG (119 aa)) are cytoplasmic. The segment covering 12–27 (ARADGAGDEAAERTEE) has biased composition (basic and acidic residues). 2 positions are modified to phosphoserine: Ser-30 and Ser-33. Thr-37 is subject to Phosphothreonine. Phosphoserine is present on residues Ser-50 and Ser-62. A discontinuously helical membrane pass occupies residues 120-142 (TFIGVYLPCLQNILGVILFLRLT). Asn-131 and Ile-132 together coordinate K(+). Val-135 contacts chloride. The Extracellular segment spans residues 143–149 (WIVGAAG). Residues 150–172 (VMESFLIVAMCCTCTMLTAISMS) traverse the membrane as a helical segment. The Cytoplasmic segment spans residues 173 to 196 (AIATNGVVPAGGSYYMISRSLGPE). A helical transmembrane segment spans residues 197–225 (FGGAVGLCFYLGTTFAGAMYILGTIEIFL). Over 226–249 (TYISPSAAIFQAETADGEAAALLN) the chain is Extracellular. The next 2 membrane-spanning stretches (helical) occupy residues 250–271 (NMRV…VGVK) and 272–300 (YVNK…KTAF). Residues 301 to 419 (APPDIPVCLL…PYVLTDIMTY (119 aa)) lie on the Extracellular side of the membrane. Asn-312 is a glycosylation site (N-linked (GlcNAc...) (high mannose) asparagine). Residues Asn-331 and Asn-344 are each glycosylated (N-linked (GlcNAc...) (complex) asparagine). Residue Asn-360 is glycosylated (N-linked (GlcNAc...) (high mannose) asparagine). The helical transmembrane segment at 420–440 (FTMLVGIYFPSVTGIMAGSNR) threads the bilayer. The K(+) site is built by Pro-429 and Thr-432. Pro-429 serves as a coordination point for chloride. 2 residues coordinate chloride: Gly-433 and Ile-434. Residues 441–450 (SGDLKDAQKS) lie on the Cytoplasmic side of the membrane. The helical transmembrane segment at 451-473 (IPTGTILAIVTTSFIYLSCIVLF) threads the bilayer. At 474–504 (GACIEGVVLRDKFGEALQGNLVIGMLAWPSP) the chain is on the extracellular side. Residues 505-531 (WVIVIGSFFSTCGAGLQSLTGAPRLLQ) form a helical membrane-spanning segment. Residues 532 to 554 (AIARDGIIPFLQVFGHGKANGEP) are Cytoplasmic-facing. 2 helical membrane passes run 555–573 (TWAL…LIAS) and 574–598 (LDSV…ACAV). Position 589 (Tyr-589) interacts with chloride. The Cytoplasmic portion of the chain corresponds to 599–612 (QTLLRTPNWRPRFK). A run of 2 helical transmembrane segments spans residues 613–635 (FYHW…ICSW) and 636–651 (YYAL…IYKY). Residues 652–1083 (IEYRGAEKEW…GGREVITIYS (432 aa)) are Cytoplasmic-facing. The tract at residues 664-680 (GIRGLSLNAARYALLRV) is scissor helix. 2 positions are modified to phosphothreonine: Thr-973 and Thr-980.

Belongs to the SLC12A transporter family. K/Cl co-transporter subfamily. As to quaternary structure, homodimer; adopts a domain-swap conformation at the scissor helices connecting the transmembrane domain and C-terminal domain. Heterodimer with K-Cl cotransporter SLC12A5. Post-translationally, glycosylation at Asn-331 and Asn-344 is required for proper trafficking to the cell surface, and augments protein stability. Detected in proximal tubules in the kidney, in particular in basolateral membranes of intercalated cells in the cortical collecting duct.

It is found in the cell membrane. It catalyses the reaction K(+)(in) + chloride(in) = K(+)(out) + chloride(out). Its activity is regulated as follows. Activated by N-ethylmaleimide (NEM). Inhibited by furosemide, DIDS and bumetanide. The inhibition is much stronger in the presence of 50 mM K(+) in the uptake medium. Inhibited by DIOA. Inhibited by WNK3. In terms of biological role, mediates electroneutral potassium-chloride cotransport when activated by cell swelling. May mediate K(+) uptake into Deiters' cells in the cochlea and contribute to K(+) recycling in the inner ear. Important for the survival of cochlear outer and inner hair cells and the maintenance of the organ of Corti. May be required for basolateral Cl(-) extrusion in the kidney and contribute to renal acidification. This Mus musculus (Mouse) protein is Solute carrier family 12 member 7 (Slc12a7).